Here is a 577-residue protein sequence, read N- to C-terminus: Arginine--tRNA ligase (577 aa).

A 'HIGH' region motif is present at residues 122–132; that stretch reads PNVAKEMHVGH.

Belongs to the class-I aminoacyl-tRNA synthetase family. In terms of assembly, monomer.

It is found in the cytoplasm. The enzyme catalyses tRNA(Arg) + L-arginine + ATP = L-arginyl-tRNA(Arg) + AMP + diphosphate. This chain is Arginine--tRNA ligase, found in Aliivibrio salmonicida (strain LFI1238) (Vibrio salmonicida (strain LFI1238)).